The primary structure comprises 1386 residues: MSSSVRRKGKPGKGGGKGSSRGGRGGRSHASKSHGSGGGGGGGGGGGGGNRKASSRIWDDGDDFCIFSESRRPSRPSNSNISKGESRPKWKPKAKVPLQTLHMTSENQEKVKALLRDLQEQDADAGSERGLSGEEEDDEPDCCNDERYWPAGQEPSLVPDLDPLEYAGLASVEPYVPEFTVSPFAVQKLSRYGFNTERCQAVLRMCDGDVGASLEHLLTQCFSETFGERMKISEAVNQISLDECMEQRQEEAFALKSICGEKFIERIQNRVWTIGLELEYLTSRFRKSKPKESTKNVQENSLEICKFYLKGNCKFGSKCRFKHEVPPNQIVGRIERSVDDSHLNAIEDASFLYELEIRFSKDHKYPYQAPLVAFYSTNENLPLACRLHISEFLYDKALTFAETSEPVVYSLITLLEEESEIVKLLTNTHHKYSDPPVNFLPVPSRTRINNPACHKTVIPNNSFVSNQIPEVEKASESEESDEDDGPAPVIVENESYVNLKKKISKRYDWQAKSVHAENGKICKQFRMKQASRQFQSILQERQSLPAWEERETILNLLRKHQVVVISGMTGCGKTTQIPQFILDDSLNGPPEKVANIICTQPRRISAISVAERVAKERAERVGLTVGYQIRLESVKSSATRLLYCTTGVLLRRLEGDTALQGVSHIIVDEVHERTEESDFLLLVLKDIVSQRPGLQVILMSATLNAELFSDYFNSCPVITIPGRTFPVDQFFLEDAIAVTRYVLQDGSPYMRSMKQISKEKLKARRNRTAFEEVEEDLRLSLHLQDQDSVKDAVPDQQLDFKQLLARYKGVSKSVIKTMSIMDFEKVNLELIEALLEWIVDGKHSYPPGAILVFLPGLAEIKMLYEQLQSNSLFNNRRSNRCVIHPLHSSLSSEEQQAVFVKPPAGVTKIIISTNIAETSITIDDVVYVIDSGKMKEKRYDASKGMESLEDTFVSQANALQRKGRAGRVASGVCFHLFTSHHYNHQLLKQQLPEIQRVPLEQLCLRIKILEMFSAHNLQSVFSRLIEPPHTDSLRASKIRLRDLGALTPDERLTPLGYHLASLPVDVRIGKLMLFGSIFRCLDPALTIAASLAFKSPFVSPWDKKEEANQKKLEFAFANSDYLALLQAYKGWQLSTKEGVRASYNYCRQNFLSGRVLQEMASLKRQFTELLSDIGFAREGLRAREIEKRAQGGDGVLDATGEEANSNAENPKLISAMLCAALYPNVVQVKSPEGKFQKTSTGAVRMQPKSAELKFVTKNDGYVHIHPSSVNYQVRHFDSPYLLYHEKIKTSRVFIRDCSMVSVYPLVLFGGGQVNVQLQRGEFVVSLDDGWIRFVAASHQVAELVKELRCELDQLLQDKIKNPSIDLCTCPRGSRIISTIVKLVTTQ.

A compositionally biased stretch (basic residues) spans 1–11 (MSSSVRRKGKP). Disordered stretches follow at residues 1 to 106 (MSSS…MTSE) and 120 to 147 (EQDA…NDER). Composition is skewed to gly residues over residues 12–23 (GKGGGKGSSRGG) and 35–50 (GSGG…GGGN). Residues 101 to 125 (LHMTSENQEKVKALLRDLQEQDADA) adopt a coiled-coil conformation. Phosphoserine occurs at positions 127 and 132. Residues 133–143 (GEEEDDEPDCC) are compositionally biased toward acidic residues. Positions 180–220 (TVSPFAVQKLSRYGFNTERCQAVLRMCDGDVGASLEHLLTQ) constitute a UBA domain. The C3H1-type zinc finger occupies 299–326 (ENSLEICKFYLKGNCKFGSKCRFKHEVP). 3 positions are modified to phosphoserine: Ser475, Ser477, and Ser480. One can recognise a Helicase ATP-binding domain in the interval 554–721 (LNLLRKHQVV…FNSCPVITIP (168 aa)). 567-574 (GMTGCGKT) is an ATP binding site. The DEVH box signature appears at 668–671 (DEVH). The Helicase C-terminal domain occupies 830–1010 (LIEALLEWIV…QLCLRIKILE (181 aa)).

It belongs to the DEAD box helicase family. DEAH subfamily.

It catalyses the reaction ATP + H2O = ADP + phosphate + H(+). Probable ATP-binding RNA helicase. The chain is Putative ATP-dependent RNA helicase DHX57 (DHX57) from Homo sapiens (Human).